The primary structure comprises 215 residues: Cytochrome b6 (215 aa).

The chain crosses the membrane as a helical span at residues 32–52 (IFYCLGGITLTCFLVQVATGF). Heme c is bound at residue cysteine 35. The heme b site is built by histidine 86 and histidine 100. 3 consecutive transmembrane segments (helical) span residues 90 to 110 (ASMM…TGGF), 116 to 136 (LTWV…VTGY), and 186 to 206 (LHTF…FPMI). Residues histidine 187 and histidine 202 each contribute to the heme b site.

Belongs to the cytochrome b family. PetB subfamily. In terms of assembly, the 4 large subunits of the cytochrome b6-f complex are cytochrome b6, subunit IV (17 kDa polypeptide, PetD), cytochrome f and the Rieske protein, while the 4 small subunits are PetG, PetL, PetM and PetN. The complex functions as a dimer. It depends on heme b as a cofactor. Requires heme c as cofactor.

The protein resides in the plastid. The protein localises to the chloroplast thylakoid membrane. In terms of biological role, component of the cytochrome b6-f complex, which mediates electron transfer between photosystem II (PSII) and photosystem I (PSI), cyclic electron flow around PSI, and state transitions. This Vitis vinifera (Grape) protein is Cytochrome b6.